Reading from the N-terminus, the 2579-residue chain is Ectopic P granules protein 5 homolog (2579 aa).

2 disordered regions span residues 1-46 (MAEA…SREQ) and 92-132 (NEES…GTKV). Positions 7 to 23 (PQRRAKAKASRTKTKEK) are enriched in basic residues. Positions 24 to 34 (KKYETPQREES) are enriched in basic and acidic residues. Thr-134 is subject to Phosphothreonine. A disordered region spans residues 535–564 (PSERKPSSSGPGSGTWTLVDEGGEEDEDPE). Residues 555–564 (EGGEEDEDPE) show a composition bias toward acidic residues. Residues 1607–1633 (MHKNEAISQQLHVLRKEVKQLQAEAAK) adopt a coiled-coil conformation.

Belongs to the EPG5 family. As to quaternary structure, interacts with RAN.

The protein localises to the cytoplasm. It is found in the perinuclear region. The protein resides in the lysosome. Involved in autophagy. May play a role in a late step of autophagy, such as clearance of autophagosomal cargo. Plays a key role in innate and adaptive immune response triggered by unmethylated cytidine-phosphate-guanosine (CpG) dinucleotides from pathogens, and mediated by the nucleotide-sensing receptor TLR9. It is necessary for the translocation of CpG dinucleotides from early endosomes to late endosomes and lysosomes, where TLR9 is located. This is Ectopic P granules protein 5 homolog (EPG5) from Homo sapiens (Human).